The sequence spans 430 residues: Carbamoyl phosphate synthase arginine-specific small chain (430 aa).

The N-terminal 9 residues, 1 to 9 (MLSATKRYL), are a transit peptide targeting the mitochondrion. A Glutamine amidotransferase type-1 domain is found at 219 to 407 (HIAVLDCGAK…FDNINVYKKS (189 aa)). Cys296 functions as the Nucleophile in the catalytic mechanism. Active-site residues include His380 and Glu382.

The protein belongs to the CarA family. In terms of assembly, heterodimer composed of 2 chains; the small (or glutamine) chain promotes the hydrolysis of glutamine to ammonia, which is used by the large (or ammonia) chain to synthesize carbamoyl phosphate.

The protein localises to the mitochondrion matrix. It carries out the reaction hydrogencarbonate + L-glutamine + 2 ATP + H2O = carbamoyl phosphate + L-glutamate + 2 ADP + phosphate + 2 H(+). It catalyses the reaction L-glutamine + H2O = L-glutamate + NH4(+). It participates in amino-acid biosynthesis; L-arginine biosynthesis; carbamoyl phosphate from bicarbonate: step 1/1. Small subunit of the arginine-specific carbamoyl phosphate synthase (CPSase). CPSase catalyzes the formation of carbamoyl phosphate from the ammonia moiety of glutamine, carbonate, and phosphate donated by ATP, the first step of the arginine biosynthetic pathway. The small subunit (glutamine amidotransferase) binds and cleaves glutamine to supply the large subunit with the substrate ammonia. The protein is Carbamoyl phosphate synthase arginine-specific small chain (CPA1) of Candida albicans (strain SC5314 / ATCC MYA-2876) (Yeast).